Reading from the N-terminus, the 160-residue chain is Probable small nuclear ribonucleoprotein-associated protein B (160 aa).

One can recognise a Sm domain in the interval 4-86; that stretch reads SKNNKMMAHL…IVSMTVDGPP (83 aa). The tract at residues 80 to 160 is disordered; the sequence is MTVDGPPPRD…YGGPPGGRPF (81 aa). Composition is skewed to gly residues over residues 99–113, 128–143, and 150–160; these read GGAGGVGQAKPGGRG, APGGLSGAMRGHGGPG, and GYGGPPGGRPF.

The protein belongs to the snRNP SmB/SmN family.

Its subcellular location is the nucleus. The protein resides in the cytoplasm. It localises to the cytosol. Plays a role in pre-mRNA splicing as a core component of the spliceosomal U1, U2, U4 and U5 small nuclear ribonucleoproteins (snRNPs), the building blocks of the spliceosome. This Caenorhabditis elegans protein is Probable small nuclear ribonucleoprotein-associated protein B (snr-2).